A 178-amino-acid chain; its full sequence is Translation initiation factor IF-3 (178 aa).

This sequence belongs to the IF-3 family. As to quaternary structure, monomer.

It is found in the cytoplasm. In terms of biological role, IF-3 binds to the 30S ribosomal subunit and shifts the equilibrium between 70S ribosomes and their 50S and 30S subunits in favor of the free subunits, thus enhancing the availability of 30S subunits on which protein synthesis initiation begins. The chain is Translation initiation factor IF-3 from Ralstonia nicotianae (strain ATCC BAA-1114 / GMI1000) (Ralstonia solanacearum).